We begin with the raw amino-acid sequence, 475 residues long: Ribulose bisphosphate carboxylase large chain (475 aa).

Residues 1-2 constitute a propeptide that is removed on maturation; it reads MS. Pro3 bears the N-acetylproline mark. At Lys14 the chain carries N6,N6,N6-trimethyllysine. The substrate site is built by Asn123 and Thr173. Catalysis depends on Lys175, which acts as the Proton acceptor. Substrate is bound at residue Lys177. Residues Lys201, Asp203, and Glu204 each contribute to the Mg(2+) site. Residue Lys201 is modified to N6-carboxylysine. The active-site Proton acceptor is His294. The substrate site is built by Arg295, His327, and Ser379.

The protein belongs to the RuBisCO large chain family. Type I subfamily. In terms of assembly, heterohexadecamer of 8 large chains and 8 small chains; disulfide-linked. The disulfide link is formed within the large subunit homodimers. Mg(2+) serves as cofactor. In terms of processing, the disulfide bond which can form in the large chain dimeric partners within the hexadecamer appears to be associated with oxidative stress and protein turnover.

It localises to the plastid. The protein localises to the chloroplast. The enzyme catalyses 2 (2R)-3-phosphoglycerate + 2 H(+) = D-ribulose 1,5-bisphosphate + CO2 + H2O. It catalyses the reaction D-ribulose 1,5-bisphosphate + O2 = 2-phosphoglycolate + (2R)-3-phosphoglycerate + 2 H(+). RuBisCO catalyzes two reactions: the carboxylation of D-ribulose 1,5-bisphosphate, the primary event in carbon dioxide fixation, as well as the oxidative fragmentation of the pentose substrate in the photorespiration process. Both reactions occur simultaneously and in competition at the same active site. The polypeptide is Ribulose bisphosphate carboxylase large chain (Piper cenocladum (Ant piper)).